Consider the following 432-residue polypeptide: D-amino acid dehydrogenase (432 aa).

3 to 17 (VVILGSGVVGVASAW) provides a ligand contact to FAD.

The protein belongs to the DadA oxidoreductase family. Requires FAD as cofactor.

The catalysed reaction is a D-alpha-amino acid + A + H2O = a 2-oxocarboxylate + AH2 + NH4(+). It functions in the pathway amino-acid degradation; D-alanine degradation; NH(3) and pyruvate from D-alanine: step 1/1. Its function is as follows. Oxidative deamination of D-amino acids. The polypeptide is D-amino acid dehydrogenase (Klebsiella pneumoniae (strain 342)).